The sequence spans 263 residues: Hydroxyethylthiazole kinase 1 (263 aa).

M42 provides a ligand contact to substrate. ATP contacts are provided by K118 and T164. G191 provides a ligand contact to substrate.

This sequence belongs to the Thz kinase family. The cofactor is Mg(2+).

The enzyme catalyses 5-(2-hydroxyethyl)-4-methylthiazole + ATP = 4-methyl-5-(2-phosphooxyethyl)-thiazole + ADP + H(+). It functions in the pathway cofactor biosynthesis; thiamine diphosphate biosynthesis; 4-methyl-5-(2-phosphoethyl)-thiazole from 5-(2-hydroxyethyl)-4-methylthiazole: step 1/1. In terms of biological role, catalyzes the phosphorylation of the hydroxyl group of 4-methyl-5-beta-hydroxyethylthiazole (THZ). In Clostridium botulinum (strain 657 / Type Ba4), this protein is Hydroxyethylthiazole kinase 1.